We begin with the raw amino-acid sequence, 461 residues long: Coronin-1A (461 aa).

Residue Ser-2 is modified to N-acetylserine. A Phosphoserine; by PKC modification is found at Ser-2. WD repeat units follow at residues 13–63 (HVFG…LVLP), 73–110 (NVPLVCGHTAPVLDIAWCPHNDNVIASGSEDCTVMVWE), 123–160 (PVITLEGHTKRVGIVAWHPTAQNVLLSAGCDNVILVWD), 164–204 (GAAV…RVIE), 207–251 (KGTV…ALWD), 258–296 (PLSLQELDTSSGVLLPFFDPDTNIVYLCGKGDSSIRYFE), and 302–349 (PFLH…EPIA). Positions 403–418 (ELRVNRGLDSARRRAT) are enriched in basic and acidic residues. Positions 403 to 434 (ELRVNRGLDSARRRATPEPSGTPSSDTVSRLE) are disordered. Position 412 is a phosphoserine; by PKC (Ser-412). At Thr-418 the chain carries Phosphothreonine. Polar residues predominate over residues 421-430 (PSGTPSSDTV). Ser-422 carries the phosphoserine modification. The stretch at 424–461 (TPSSDTVSRLEEDVRNLNAIVQKLQERLDRLEETVQAK) forms a coiled coil.

The protein belongs to the WD repeat coronin family. As to quaternary structure, binds actin. In terms of processing, phosphorylation at Ser-412 by PKC strongly down-regulates the association with actin. Post-translationally, polyubiquitinated by RNF128 with 'Lys-48'-linked chains, leading to proteasomal degradation. Expressed in spleen, lymph nodes, thymus, brain and at very lower levels in lung. Also expressed in cells of the lymphoid/myeloid lineage. Not expressed in Kuffper cells.

Its subcellular location is the cytoplasm. It localises to the cytoskeleton. The protein resides in the cell cortex. It is found in the cytoplasmic vesicle. The protein localises to the phagosome membrane. Functionally, may be a crucial component of the cytoskeleton of highly motile cells, functioning both in the invagination of large pieces of plasma membrane, as well as in forming protrusions of the plasma membrane involved in cell locomotion. In mycobacteria-infected cells, its retention on the phagosomal membrane prevents fusion between phagosomes and lysosomes. The chain is Coronin-1A (Coro1a) from Mus musculus (Mouse).